Reading from the N-terminus, the 55-residue chain is Large ribosomal subunit protein bL33 (55 aa).

The protein belongs to the bacterial ribosomal protein bL33 family.

This chain is Large ribosomal subunit protein bL33, found in Mycobacterium leprae (strain Br4923).